The chain runs to 196 residues: MYDYIKGTLVKITAKHIVIETNGLGYIVTVANPYSFSDQMNQTIQVYLHQVIRDDAHLLFGFHTEDEKEVFLKLISVSGIGPTTALAIVAVDDNQGLVAAIDNSDIKYLMKFPKIGKKTAQQMVLDLAGKFAELPAETTNTTANQTAGNQQLDEAMEALLALGYKATELKKVKAFFEDTNETAEQYIKSALKMLMK.

The segment at 1-63 (MYDYIKGTLV…DDAHLLFGFH (63 aa)) is domain I. The interval 64-142 (TEDEKEVFLK…ELPAETTNTT (79 aa)) is domain II. Positions 143 to 146 (ANQT) are flexible linker. The domain III stretch occupies residues 147–196 (AGNQQLDEAMEALLALGYKATELKKVKAFFEDTNETAEQYIKSALKMLMK).

This sequence belongs to the RuvA family. As to quaternary structure, homotetramer. Forms an RuvA(8)-RuvB(12)-Holliday junction (HJ) complex. HJ DNA is sandwiched between 2 RuvA tetramers; dsDNA enters through RuvA and exits via RuvB. An RuvB hexamer assembles on each DNA strand where it exits the tetramer. Each RuvB hexamer is contacted by two RuvA subunits (via domain III) on 2 adjacent RuvB subunits; this complex drives branch migration. In the full resolvosome a probable DNA-RuvA(4)-RuvB(12)-RuvC(2) complex forms which resolves the HJ.

Its subcellular location is the cytoplasm. Functionally, the RuvA-RuvB-RuvC complex processes Holliday junction (HJ) DNA during genetic recombination and DNA repair, while the RuvA-RuvB complex plays an important role in the rescue of blocked DNA replication forks via replication fork reversal (RFR). RuvA specifically binds to HJ cruciform DNA, conferring on it an open structure. The RuvB hexamer acts as an ATP-dependent pump, pulling dsDNA into and through the RuvAB complex. HJ branch migration allows RuvC to scan DNA until it finds its consensus sequence, where it cleaves and resolves the cruciform DNA. In Streptococcus thermophilus (strain ATCC BAA-491 / LMD-9), this protein is Holliday junction branch migration complex subunit RuvA.